A 188-amino-acid chain; its full sequence is Guanylate kinase (188 aa).

The Guanylate kinase-like domain occupies 8–188 (GRIVVLAGPS…AVAAISEILR (181 aa)). ATP is bound at residue 15–22 (GPSAVGKS).

Belongs to the guanylate kinase family.

The protein localises to the cytoplasm. The catalysed reaction is GMP + ATP = GDP + ADP. In terms of biological role, essential for recycling GMP and indirectly, cGMP. The protein is Guanylate kinase of Corynebacterium jeikeium (strain K411).